The chain runs to 83 residues: Weak toxin DE-1 homolog 1 (83 aa).

The first 21 residues, 1–21 (MKPVLLTLVVVTIVCLDLGYT), serve as a signal peptide directing secretion. Disulfide bonds link cysteine 24-cysteine 45, cysteine 38-cysteine 62, cysteine 64-cysteine 75, and cysteine 76-cysteine 81.

It belongs to the three-finger toxin family. Short-chain subfamily. Type I alpha-neurotoxin sub-subfamily. In terms of tissue distribution, expressed by the venom gland.

The protein resides in the secreted. Binds to muscle nicotinic acetylcholine receptor (nAChR) and inhibit acetylcholine from binding to the receptor, thereby impairing neuromuscular transmission. The polypeptide is Weak toxin DE-1 homolog 1 (Ophiophagus hannah (King cobra)).